A 388-amino-acid polypeptide reads, in one-letter code: Beta-hexosaminidase LpqI (388 aa).

Residues 1 to 19 (MAFPRTLAILAAAAALVVA) form the signal peptide. The N-palmitoyl cysteine moiety is linked to residue C20. C20 carries S-diacylglycerol cysteine lipidation. Substrate-binding positions include D123, R131, R193, and 223-224 (KH). H236 functions as the Proton donor/acceptor in the catalytic mechanism. D311 acts as the Nucleophile in catalysis.

This sequence belongs to the glycosyl hydrolase 3 family.

Its subcellular location is the cell inner membrane. The catalysed reaction is Hydrolysis of terminal non-reducing N-acetyl-D-hexosamine residues in N-acetyl-beta-D-hexosaminides.. Its pathway is cell wall biogenesis; peptidoglycan recycling. Functionally, plays a role in peptidoglycan recycling by cleaving the terminal beta-1,4-linked N-acetylglucosamine (GlcNAc) from peptidoglycan fragments. Acts as a regulator for GlcNAc-MurNAc levels by cleaving disaccharides and allowing the breakdown of MurNAc. The polypeptide is Beta-hexosaminidase LpqI (Mycobacterium bovis (strain BCG / Pasteur 1173P2)).